Reading from the N-terminus, the 394-residue chain is 1-deoxy-D-xylulose 5-phosphate reductoisomerase (394 aa).

Residues Thr10, Gly11, Ser12, Ile13, Asn38, and Asn125 each coordinate NADPH. Lys126 contributes to the 1-deoxy-D-xylulose 5-phosphate binding site. Glu127 is a binding site for NADPH. Asp151 provides a ligand contact to Mn(2+). Residues Ser152, Glu153, Ser182, and His205 each coordinate 1-deoxy-D-xylulose 5-phosphate. Residue Glu153 participates in Mn(2+) binding. Gly211 provides a ligand contact to NADPH. Residues Ser218, Asn223, Lys224, and Glu227 each contribute to the 1-deoxy-D-xylulose 5-phosphate site. Position 227 (Glu227) interacts with Mn(2+).

It belongs to the DXR family. The cofactor is Mg(2+). Mn(2+) serves as cofactor.

The enzyme catalyses 2-C-methyl-D-erythritol 4-phosphate + NADP(+) = 1-deoxy-D-xylulose 5-phosphate + NADPH + H(+). The protein operates within isoprenoid biosynthesis; isopentenyl diphosphate biosynthesis via DXP pathway; isopentenyl diphosphate from 1-deoxy-D-xylulose 5-phosphate: step 1/6. Catalyzes the NADPH-dependent rearrangement and reduction of 1-deoxy-D-xylulose-5-phosphate (DXP) to 2-C-methyl-D-erythritol 4-phosphate (MEP). The sequence is that of 1-deoxy-D-xylulose 5-phosphate reductoisomerase from Methylococcus capsulatus (strain ATCC 33009 / NCIMB 11132 / Bath).